The following is a 332-amino-acid chain: tRNA dimethylallyltransferase (332 aa).

30-37 (GPTAVGKT) provides a ligand contact to ATP. 32 to 37 (TAVGKT) is a substrate binding site. The tract at residues 57–60 (DSMQ) is interaction with substrate tRNA.

The protein belongs to the IPP transferase family. Monomer. The cofactor is Mg(2+).

It carries out the reaction adenosine(37) in tRNA + dimethylallyl diphosphate = N(6)-dimethylallyladenosine(37) in tRNA + diphosphate. Its function is as follows. Catalyzes the transfer of a dimethylallyl group onto the adenine at position 37 in tRNAs that read codons beginning with uridine, leading to the formation of N6-(dimethylallyl)adenosine (i(6)A). The chain is tRNA dimethylallyltransferase from Natranaerobius thermophilus (strain ATCC BAA-1301 / DSM 18059 / JW/NM-WN-LF).